Here is a 190-residue protein sequence, read N- to C-terminus: Holliday junction branch migration complex subunit RuvA (190 aa).

The domain I stretch occupies residues 1–65 (MIGNLRGIVD…ENVTQLYGFI (65 aa)). The interval 66–143 (SKEEQQCLRL…KLEINNNHFH (78 aa)) is domain II. Positions 144–147 (SISE) are flexible linker. A domain III region spans residues 147-190 (EDALSALINLGYERTKAYDTIKKIEDESPNLDTKDIIRMALKTI).

It belongs to the RuvA family. As to quaternary structure, homotetramer. Forms an RuvA(8)-RuvB(12)-Holliday junction (HJ) complex. HJ DNA is sandwiched between 2 RuvA tetramers; dsDNA enters through RuvA and exits via RuvB. An RuvB hexamer assembles on each DNA strand where it exits the tetramer. Each RuvB hexamer is contacted by two RuvA subunits (via domain III) on 2 adjacent RuvB subunits; this complex drives branch migration. In the full resolvosome a probable DNA-RuvA(4)-RuvB(12)-RuvC(2) complex forms which resolves the HJ.

It localises to the cytoplasm. Functionally, the RuvA-RuvB-RuvC complex processes Holliday junction (HJ) DNA during genetic recombination and DNA repair, while the RuvA-RuvB complex plays an important role in the rescue of blocked DNA replication forks via replication fork reversal (RFR). RuvA specifically binds to HJ cruciform DNA, conferring on it an open structure. The RuvB hexamer acts as an ATP-dependent pump, pulling dsDNA into and through the RuvAB complex. HJ branch migration allows RuvC to scan DNA until it finds its consensus sequence, where it cleaves and resolves the cruciform DNA. This chain is Holliday junction branch migration complex subunit RuvA, found in Wolbachia pipientis subsp. Culex pipiens (strain wPip).